We begin with the raw amino-acid sequence, 406 residues long: Argininosuccinate synthase (406 aa).

ATP-binding positions include 11-19 (AYSGGLDTS) and A38. The L-citrulline site is built by Y91 and S96. G121 contacts ATP. L-aspartate contacts are provided by T123, N127, and D128. N127 contributes to the L-citrulline binding site. L-citrulline-binding residues include R131, S182, S191, E267, and Y279.

The protein belongs to the argininosuccinate synthase family. Type 1 subfamily. As to quaternary structure, homotetramer.

The protein resides in the cytoplasm. The catalysed reaction is L-citrulline + L-aspartate + ATP = 2-(N(omega)-L-arginino)succinate + AMP + diphosphate + H(+). It participates in amino-acid biosynthesis; L-arginine biosynthesis; L-arginine from L-ornithine and carbamoyl phosphate: step 2/3. The sequence is that of Argininosuccinate synthase from Rhodospirillum centenum (strain ATCC 51521 / SW).